The sequence spans 396 residues: MSVRLVLAKGREKSLLRRHPWVFSGAVARMEGKASLGETIDIVDHQGKWLARGAYSPASQIRARVWTFDPSESIDIAFFSRRLQQAQKWRDWLAQKDGLDSYRLIAGESDGLPGITIDRFGNFLVLQLLSAGAEYQRAALISALQTLYPECAIYDRSDVAVRKKEGMELTQGLVTGELPPALLPIEEHGMKLLVDIHHGHKTAYYLDQRDSRLATRRYVENKRVLNCFSYTGGFAVSALMGGCSQVVSVDTSQEALDIARQNVELNKLDLSKAEFVRDDVFKLLRTYRDRGEKFDVIVMDPPKFVENKSQLMGACRGYKDINMLAIQLLNEGGILLTFSCSGLMTSDLFQKIIADAAIDAGRDVQFIEQFRQAADHPVIATYPEGLYLKGFACRVM.

The PUA domain maps to 2-81; it reads SVRLVLAKGR…ESIDIAFFSR (80 aa).

It belongs to the methyltransferase superfamily. RlmI family.

It is found in the cytoplasm. The catalysed reaction is cytidine(1962) in 23S rRNA + S-adenosyl-L-methionine = 5-methylcytidine(1962) in 23S rRNA + S-adenosyl-L-homocysteine + H(+). In terms of biological role, specifically methylates the cytosine at position 1962 (m5C1962) of 23S rRNA. This is Ribosomal RNA large subunit methyltransferase I from Shigella flexneri serotype 5b (strain 8401).